Consider the following 286-residue polypeptide: Transcription factor bHLH11 (286 aa).

The segment at 1–34 is disordered; the sequence is MDQPMKPKTCSESDFADDSSASSSSSSGQNLRGA. A compositionally biased stretch (low complexity) spans 18-27; sequence DSSASSSSSS. A bHLH domain is found at 44–94; the sequence is AVCSQKAEREKLRRDKLKEQFLELGNALDPNRPKSDKASVLTDTIQMLKDV. 2 disordered regions span residues 182–202 and 244–286; these read EQQA…MKQD and QQDV…MLKP. Low complexity-rich tracts occupy residues 183 to 198 and 255 to 269; these read QQAS…ADAS and SLTT…YSLS. Over residues 270–279 the composition is skewed to polar residues; the sequence is QAVQDSSPGT.

Homodimer. As to expression, expressed consitutively in roots, leaves, stems, and flowers.

The protein localises to the nucleus. This is Transcription factor bHLH11 (BHLH11) from Arabidopsis thaliana (Mouse-ear cress).